Consider the following 363-residue polypeptide: UDP-N-acetylglucosamine--N-acetylmuramyl-(pentapeptide) pyrophosphoryl-undecaprenol N-acetylglucosamine transferase (363 aa).

UDP-N-acetyl-alpha-D-glucosamine contacts are provided by residues 10-12, asparagine 124, serine 195, isoleucine 250, and glutamine 295; that span reads TGG.

It belongs to the glycosyltransferase 28 family. MurG subfamily.

The protein localises to the cell membrane. It catalyses the reaction di-trans,octa-cis-undecaprenyl diphospho-N-acetyl-alpha-D-muramoyl-L-alanyl-D-glutamyl-meso-2,6-diaminopimeloyl-D-alanyl-D-alanine + UDP-N-acetyl-alpha-D-glucosamine = di-trans,octa-cis-undecaprenyl diphospho-[N-acetyl-alpha-D-glucosaminyl-(1-&gt;4)]-N-acetyl-alpha-D-muramoyl-L-alanyl-D-glutamyl-meso-2,6-diaminopimeloyl-D-alanyl-D-alanine + UDP + H(+). It functions in the pathway cell wall biogenesis; peptidoglycan biosynthesis. Cell wall formation. Catalyzes the transfer of a GlcNAc subunit on undecaprenyl-pyrophosphoryl-MurNAc-pentapeptide (lipid intermediate I) to form undecaprenyl-pyrophosphoryl-MurNAc-(pentapeptide)GlcNAc (lipid intermediate II). The chain is UDP-N-acetylglucosamine--N-acetylmuramyl-(pentapeptide) pyrophosphoryl-undecaprenol N-acetylglucosamine transferase from Listeria monocytogenes serotype 4b (strain CLIP80459).